The chain runs to 224 residues: Urease accessory protein UreF (224 aa).

It belongs to the UreF family. As to quaternary structure, ureD, UreF and UreG form a complex that acts as a GTP-hydrolysis-dependent molecular chaperone, activating the urease apoprotein by helping to assemble the nickel containing metallocenter of UreC. The UreE protein probably delivers the nickel.

The protein localises to the cytoplasm. Its function is as follows. Required for maturation of urease via the functional incorporation of the urease nickel metallocenter. This Pseudomonas putida (strain GB-1) protein is Urease accessory protein UreF.